Reading from the N-terminus, the 671-residue chain is tRNA(Met) cytidine acetyltransferase TmcA (671 aa).

ATP-binding positions include Gln180, 202–211 (GRGKSALAGQ), and Arg319. An N-acetyltransferase domain is found at 356–531 (QTLWRSEPET…SGCYTAMALL (176 aa)). Residues 461 to 463 (IAV), 468 to 474 (QREGTGR), Glu499, and Arg506 each bind acetyl-CoA.

The protein belongs to the RNA cytidine acetyltransferase family. TmcA subfamily.

It localises to the cytoplasm. The enzyme catalyses cytidine(34) in elongator tRNA(Met) + acetyl-CoA + ATP + H2O = N(4)-acetylcytidine(34) in elongator tRNA(Met) + ADP + phosphate + CoA + H(+). Its function is as follows. Catalyzes the formation of N(4)-acetylcytidine (ac(4)C) at the wobble position of tRNA(Met), by using acetyl-CoA as an acetyl donor and ATP (or GTP). This is tRNA(Met) cytidine acetyltransferase TmcA from Shigella flexneri serotype 5b (strain 8401).